The sequence spans 318 residues: tRNA dimethylallyltransferase (318 aa).

16–23 (GPTASGKT) provides a ligand contact to ATP. 18-23 (TASGKT) is a binding site for substrate. Interaction with substrate tRNA stretches follow at residues 41–44 (DSAL), 165–169 (QRINR), 246–251 (RCVGYR), and 279–286 (KRQITWLR).

This sequence belongs to the IPP transferase family. In terms of assembly, monomer. The cofactor is Mg(2+).

The catalysed reaction is adenosine(37) in tRNA + dimethylallyl diphosphate = N(6)-dimethylallyladenosine(37) in tRNA + diphosphate. Catalyzes the transfer of a dimethylallyl group onto the adenine at position 37 in tRNAs that read codons beginning with uridine, leading to the formation of N6-(dimethylallyl)adenosine (i(6)A). In Actinobacillus succinogenes (strain ATCC 55618 / DSM 22257 / CCUG 43843 / 130Z), this protein is tRNA dimethylallyltransferase.